The chain runs to 249 residues: Superoxide dismutase 1 copper chaperone (249 aa).

The region spanning 6 to 69 (TYEATYAIPM…TLRNCGKDAI (64 aa)) is the HMA domain. His16 is a Zn(2+) binding site. The Cu cation site is built by Cys17 and Cys20. Cysteines 27 and 64 form a disulfide. Cu cation contacts are provided by Cys229 and Cys231.

The protein belongs to the CCS1 family. As to quaternary structure, homodimer, and heterodimer with apo-SOD1. Zinc-binding at His-16 of CCS1 and 'Glu-43' of apo-SOD1 is required for this heterodimerization. The cofactor is Cu(2+).

The protein resides in the cytoplasm. The protein localises to the mitochondrion intermembrane space. Its function is as follows. Copper chaperone for apo superoxide dismutase 1 (SOD1). Binds copper ions and delivers them specifically to apo-SOD1. This Saccharomyces cerevisiae (strain ATCC 204508 / S288c) (Baker's yeast) protein is Superoxide dismutase 1 copper chaperone (CCS1).